The sequence spans 448 residues: Bifunctional F420 biosynthesis protein FbiB (448 aa).

Positions 1–244 (MTGPEHGSAS…PGANDLFWLG (244 aa)) are coenzyme F420:L-glutamate ligase. Residues 20–23 (LPEF), Ser50, and Lys55 each bind GTP. Asp109 contacts a divalent metal cation. Asn112 is a GTP binding site. Residues Asp150 and Thr151 each coordinate a divalent metal cation. The tract at residues 245–448 (TAEALELGRQ…VPAADLLILK (204 aa)) is dehydro-coenzyme F420-0 reductase. FMN is bound by residues 260–264 (RRSVR) and Ala288. A coenzyme F420-(gamma-Glu)n-binding site is contributed by Asp320. Gly399 and Arg436 together coordinate FMN.

In the N-terminal section; belongs to the CofE family. Requires Mg(2+) as cofactor. Mn(2+) is required as a cofactor. K(+) serves as cofactor.

It carries out the reaction oxidized coenzyme F420-0 + GTP + L-glutamate = oxidized coenzyme F420-1 + GDP + phosphate + H(+). It catalyses the reaction oxidized coenzyme F420-1 + GTP + L-glutamate = oxidized coenzyme F420-2 + GDP + phosphate + H(+). The catalysed reaction is oxidized coenzyme F420-(gamma-L-Glu)(n) + GTP + L-glutamate = oxidized coenzyme F420-(gamma-L-Glu)(n+1) + GDP + phosphate + H(+). The enzyme catalyses oxidized coenzyme F420-0 + FMN + H(+) = dehydro coenzyme F420-0 + FMNH2. It functions in the pathway cofactor biosynthesis; coenzyme F420 biosynthesis. Functionally, bifunctional enzyme that catalyzes the GTP-dependent successive addition of multiple gamma-linked L-glutamates to the L-lactyl phosphodiester of 7,8-didemethyl-8-hydroxy-5-deazariboflavin (F420-0) to form polyglutamated F420 derivatives, and the FMNH2-dependent reduction of dehydro-F420-0 to form F420-0. This Mycobacterium tuberculosis (strain ATCC 25177 / H37Ra) protein is Bifunctional F420 biosynthesis protein FbiB.